The primary structure comprises 180 residues: Outer membrane protein YfaZ (180 aa).

The first 21 residues, 1-21 (MKKIALAGLAGMLLVSASVNA), serve as a signal peptide directing secretion.

The protein localises to the cell outer membrane. The chain is Outer membrane protein YfaZ (yfaZ) from Escherichia coli (strain K12).